Consider the following 503-residue polypeptide: Glutamate--tRNA ligase (503 aa).

Residues 15 to 25 (PSPTGHLHVGG) carry the 'HIGH' region motif. A 'KMSKS' region motif is present at residues 262 to 266 (KLSKR). ATP is bound at residue Lys265.

It belongs to the class-I aminoacyl-tRNA synthetase family. Glutamate--tRNA ligase type 1 subfamily. As to quaternary structure, monomer.

It localises to the cytoplasm. It carries out the reaction tRNA(Glu) + L-glutamate + ATP = L-glutamyl-tRNA(Glu) + AMP + diphosphate. In terms of biological role, catalyzes the attachment of glutamate to tRNA(Glu) in a two-step reaction: glutamate is first activated by ATP to form Glu-AMP and then transferred to the acceptor end of tRNA(Glu). In Chlorobium phaeobacteroides (strain BS1), this protein is Glutamate--tRNA ligase.